We begin with the raw amino-acid sequence, 592 residues long: Aspartate--tRNA(Asp/Asn) ligase (592 aa).

Residue Glu175 participates in L-aspartate binding. The interval 199–202 is aspartate; sequence QLFK. Arg221 is a binding site for L-aspartate. ATP-binding positions include 221 to 223 and Gln230; that span reads RDE. His450 is a binding site for L-aspartate. Position 483 (Glu483) interacts with ATP. Arg490 is a binding site for L-aspartate. 535 to 538 provides a ligand contact to ATP; sequence GLDR.

It belongs to the class-II aminoacyl-tRNA synthetase family. Type 1 subfamily. Homodimer.

It localises to the cytoplasm. It catalyses the reaction tRNA(Asx) + L-aspartate + ATP = L-aspartyl-tRNA(Asx) + AMP + diphosphate. Functionally, aspartyl-tRNA synthetase with relaxed tRNA specificity since it is able to aspartylate not only its cognate tRNA(Asp) but also tRNA(Asn). Reaction proceeds in two steps: L-aspartate is first activated by ATP to form Asp-AMP and then transferred to the acceptor end of tRNA(Asp/Asn). The chain is Aspartate--tRNA(Asp/Asn) ligase from Acinetobacter baumannii (strain ATCC 17978 / DSM 105126 / CIP 53.77 / LMG 1025 / NCDC KC755 / 5377).